We begin with the raw amino-acid sequence, 475 residues long: Aspartyl/glutamyl-tRNA(Asn/Gln) amidotransferase subunit B (475 aa).

The protein belongs to the GatB/GatE family. GatB subfamily. In terms of assembly, heterotrimer of A, B and C subunits.

It carries out the reaction L-glutamyl-tRNA(Gln) + L-glutamine + ATP + H2O = L-glutaminyl-tRNA(Gln) + L-glutamate + ADP + phosphate + H(+). It catalyses the reaction L-aspartyl-tRNA(Asn) + L-glutamine + ATP + H2O = L-asparaginyl-tRNA(Asn) + L-glutamate + ADP + phosphate + 2 H(+). In terms of biological role, allows the formation of correctly charged Asn-tRNA(Asn) or Gln-tRNA(Gln) through the transamidation of misacylated Asp-tRNA(Asn) or Glu-tRNA(Gln) in organisms which lack either or both of asparaginyl-tRNA or glutaminyl-tRNA synthetases. The reaction takes place in the presence of glutamine and ATP through an activated phospho-Asp-tRNA(Asn) or phospho-Glu-tRNA(Gln). The protein is Aspartyl/glutamyl-tRNA(Asn/Gln) amidotransferase subunit B of Bacillus cereus (strain G9842).